A 407-amino-acid polypeptide reads, in one-letter code: uncharacterized protein (407 aa).

This sequence belongs to the peptidase U32 family.

This is an uncharacterized protein from Methanocaldococcus jannaschii (strain ATCC 43067 / DSM 2661 / JAL-1 / JCM 10045 / NBRC 100440) (Methanococcus jannaschii).